Here is a 173-residue protein sequence, read N- to C-terminus: Shikimate kinase 1 (173 aa).

14-19 (GAGKST) serves as a coordination point for ATP. Position 18 (S18) interacts with Mg(2+). Positions 36, 60, and 82 each coordinate substrate. Residue R120 coordinates ATP. Substrate is bound at residue R140.

The protein belongs to the shikimate kinase family. Monomer. Requires Mg(2+) as cofactor.

Its subcellular location is the cytoplasm. The enzyme catalyses shikimate + ATP = 3-phosphoshikimate + ADP + H(+). It participates in metabolic intermediate biosynthesis; chorismate biosynthesis; chorismate from D-erythrose 4-phosphate and phosphoenolpyruvate: step 5/7. Catalyzes the specific phosphorylation of the 3-hydroxyl group of shikimic acid using ATP as a cosubstrate. The chain is Shikimate kinase 1 from Hamiltonella defensa subsp. Acyrthosiphon pisum (strain 5AT).